The chain runs to 502 residues: MEFSVKSGSPEKQRSACIVVGVFEPRRLSPVAEQLDKISDGYISSLLRRGDLEGKPGQMLLLHQVPGVLSERVLLVGCGKERELGERQYKEIIQKTINTLNETGSMEAVCFLTELHVKGRDTYWKVRQAVEATKDGLYTFDQFKSVKPETRRPLRKLVFNVPTRRELNLGEKAITHGLAIASGVKACKDLGNMPPNIANPAYLASQARRLADDYETITTKIIGEQEMEKLGMSSYLAVGRGSKNESMMSIIEYKGHPDSEAKPIVLVGKGLTFDSGGISLKPGEGMDEMKYDMCGAASVFGTMKALAKLNLPVNVIGVLAGCENMPGSNAYRPGDILTTMSGQTVEVLNTDAEGRLVLCDALTYVERFEPDCVVDVATLTGACVIALGHHITGVLSNHNPLAHELVNASEQSSDRAWRLPMADEYHEQLKSPFADMANIGGRPGGTITAACFLSKFAKKYNWAHLDIAGTAWKSGAAKGSTGRPVSMLVQFLLNRSGQETEE.

Positions 269 and 274 each coordinate Mn(2+). Residue Lys-281 is part of the active site. Asp-292, Asp-351, and Glu-353 together coordinate Mn(2+). Arg-355 is a catalytic residue.

This sequence belongs to the peptidase M17 family. Mn(2+) serves as cofactor.

The protein resides in the cytoplasm. The enzyme catalyses Release of an N-terminal amino acid, Xaa-|-Yaa-, in which Xaa is preferably Leu, but may be other amino acids including Pro although not Arg or Lys, and Yaa may be Pro. Amino acid amides and methyl esters are also readily hydrolyzed, but rates on arylamides are exceedingly low.. The catalysed reaction is Release of an N-terminal amino acid, preferentially leucine, but not glutamic or aspartic acids.. Presumably involved in the processing and regular turnover of intracellular proteins. Catalyzes the removal of unsubstituted N-terminal amino acids from various peptides. The protein is Probable cytosol aminopeptidase of Vibrio vulnificus (strain CMCP6).